Consider the following 393-residue polypeptide: Chalcone synthase LF2 (393 aa).

Cys-164 is an active-site residue.

The protein belongs to the thiolase-like superfamily. Chalcone/stilbene synthases family.

It catalyses the reaction (E)-4-coumaroyl-CoA + 3 malonyl-CoA + 3 H(+) = 2',4,4',6'-tetrahydroxychalcone + 3 CO2 + 4 CoA. Its pathway is secondary metabolite biosynthesis; flavonoid biosynthesis. The primary product of this enzyme is 4,2',4',6'-tetrahydroxychalcone (also termed naringenin-chalcone or chalcone) which can under specific conditions spontaneously isomerize into naringenin. This is Chalcone synthase LF2 (CHS-LF2) from Ipomoea batatas (Sweet potato).